Reading from the N-terminus, the 89-residue chain is Large ribosomal subunit protein bL27 (89 aa).

This sequence belongs to the bacterial ribosomal protein bL27 family.

The chain is Large ribosomal subunit protein bL27 from Cytophaga hutchinsonii (strain ATCC 33406 / DSM 1761 / CIP 103989 / NBRC 15051 / NCIMB 9469 / D465).